A 452-amino-acid chain; its full sequence is Bis(5'-adenosyl)-triphosphatase enpp4 (452 aa).

Residues Met-1 to Gly-19 form the signal peptide. At Glu-20 to Ala-407 the chain is on the extracellular side. Asn-24 carries an N-linked (GlcNAc...) asparagine glycan. The Zn(2+) site is built by Asp-36 and Thr-72. Thr-72 serves as the catalytic AMP-threonine intermediate. Asn-93 is a binding site for substrate. Asn-107 carries N-linked (GlcNAc...) asparagine glycosylation. Tyr-154 contributes to the substrate binding site. 2 N-linked (GlcNAc...) asparagine glycosylation sites follow: Asn-155 and Asn-175. 2 residues coordinate Zn(2+): Asp-189 and His-193. Asp-189 serves as a coordination point for substrate. N-linked (GlcNAc...) asparagine glycosylation is present at Asn-202. Zn(2+) contacts are provided by Asp-237 and His-238. Cys-254 and Cys-287 are oxidised to a cystine. Residues Asn-259 and Asn-327 are each glycosylated (N-linked (GlcNAc...) asparagine). His-336 serves as a coordination point for Zn(2+). N-linked (GlcNAc...) asparagine glycosylation is present at Asn-386. Cysteines 394 and 401 form a disulfide. The helical transmembrane segment at Ile-408 to Leu-428 threads the bilayer. Residues Lys-429–Gly-452 are Cytoplasmic-facing.

It belongs to the nucleotide pyrophosphatase/phosphodiesterase family. It depends on Zn(2+) as a cofactor.

The protein resides in the cell membrane. The enzyme catalyses P(1),P(3)-bis(5'-adenosyl) triphosphate + H2O = AMP + ADP + 2 H(+). Hydrolyzes extracellular Ap3A into AMP and ADP, and Ap4A into AMP and ATP. Ap3A and Ap4A are diadenosine polyphosphates thought to induce proliferation of vascular smooth muscle cells. Acts as a procoagulant, mediating platelet aggregation at the site of nascent thrombus via release of ADP from Ap3A and activation of ADP receptors. This is Bis(5'-adenosyl)-triphosphatase enpp4 (enpp4) from Xenopus laevis (African clawed frog).